Reading from the N-terminus, the 162-residue chain is NADH-ubiquinone oxidoreductase subunit 8 (162 aa).

4Fe-4S ferredoxin-type domains follow at residues 54-83 (RRYQTGEERCIACKLCEAICPAQAITIESE) and 93-122 (TRYDIDMTKCIYCGFCQEACPVDAIVEGPN). Positions 63, 66, 69, 73, 102, 105, 108, and 112 each coordinate [4Fe-4S] cluster.

It belongs to the complex I 23 kDa subunit family. [4Fe-4S] cluster serves as cofactor.

It localises to the mitochondrion. The enzyme catalyses a ubiquinone + NADH + 5 H(+)(in) = a ubiquinol + NAD(+) + 4 H(+)(out). Functionally, core subunit of the mitochondrial membrane respiratory chain NADH dehydrogenase (Complex I) that is believed to belong to the minimal assembly required for catalysis. Complex I functions in the transfer of electrons from NADH to the respiratory chain. The immediate electron acceptor for the enzyme is believed to be ubiquinone. May donate electrons to ubiquinone. The sequence is that of NADH-ubiquinone oxidoreductase subunit 8 (NAD8) from Reclinomonas americana.